The primary structure comprises 176 residues: Lipoprotein signal peptidase (176 aa).

Helical transmembrane passes span 10 to 30 (LFQFYPHNLIWLGLSVLAIVL), 48 to 68 (VPVLPFLNWTLLHNYGAAFSF), 78 to 98 (YFFTSLAGLVSILFVFWLLRM), and 102 to 122 (MVVLPVAIALILGGALGNLID). Catalysis depends on residues Asp-131 and Asp-149. The chain crosses the membrane as a helical span at residues 141-161 (HFPAFNIADSAITLGTILLLI).

It belongs to the peptidase A8 family.

The protein localises to the cell inner membrane. The enzyme catalyses Release of signal peptides from bacterial membrane prolipoproteins. Hydrolyzes -Xaa-Yaa-Zaa-|-(S,diacylglyceryl)Cys-, in which Xaa is hydrophobic (preferably Leu), and Yaa (Ala or Ser) and Zaa (Gly or Ala) have small, neutral side chains.. The protein operates within protein modification; lipoprotein biosynthesis (signal peptide cleavage). Its function is as follows. This protein specifically catalyzes the removal of signal peptides from prolipoproteins. In Acinetobacter baumannii (strain SDF), this protein is Lipoprotein signal peptidase.